The chain runs to 425 residues: Adenosine 3'-phospho 5'-phosphosulfate transporter 1 (425 aa).

The next 9 helical transmembrane spans lie at 27 to 47 (FLIL…IYYV), 102 to 122 (VIIL…AMGV), 147 to 167 (TQFL…MILA), 232 to 252 (YSWF…LFLL), 263 to 283 (ITYT…FDAF), 303 to 323 (MMFG…IEQG), 342 to 360 (VFLL…YSTI), 365 to 387 (PIVF…TIMY), and 391 to 411 (LTFL…VDIH).

It belongs to the nucleotide-sugar transporter family. SLC35B subfamily.

The protein resides in the golgi apparatus membrane. In terms of biological role, mediates the transport of adenosine 3'-phospho 5'-phosphosulfate (PAPS), from cytosol into Golgi. PAPS is a universal sulfuryl donor for sulfation events that take place in the Golgi. In Caenorhabditis elegans, this protein is Adenosine 3'-phospho 5'-phosphosulfate transporter 1 (pst-1).